Consider the following 75-residue polypeptide: Small ribosomal subunit protein bS18 (75 aa).

The protein belongs to the bacterial ribosomal protein bS18 family. Part of the 30S ribosomal subunit. Forms a tight heterodimer with protein bS6.

Its function is as follows. Binds as a heterodimer with protein bS6 to the central domain of the 16S rRNA, where it helps stabilize the platform of the 30S subunit. This chain is Small ribosomal subunit protein bS18, found in Shewanella loihica (strain ATCC BAA-1088 / PV-4).